Here is a 312-residue protein sequence, read N- to C-terminus: DNA-directed RNA polymerase subunit alpha (312 aa).

Residues 1 to 226 (MIEFEKPKIT…DHLNLFVDLS (226 aa)) are alpha N-terminal domain (alpha-NTD). The tract at residues 243-312 (TERVLDKIIE…ELGLSLKKRK (70 aa)) is alpha C-terminal domain (alpha-CTD).

Belongs to the RNA polymerase alpha chain family. Homodimer. The RNAP catalytic core consists of 2 alpha, 1 beta, 1 beta' and 1 omega subunit. When a sigma factor is associated with the core the holoenzyme is formed, which can initiate transcription.

The catalysed reaction is RNA(n) + a ribonucleoside 5'-triphosphate = RNA(n+1) + diphosphate. Its function is as follows. DNA-dependent RNA polymerase catalyzes the transcription of DNA into RNA using the four ribonucleoside triphosphates as substrates. This is DNA-directed RNA polymerase subunit alpha from Lactococcus lactis subsp. lactis (strain IL1403) (Streptococcus lactis).